We begin with the raw amino-acid sequence, 164 residues long: Anterior gradient protein 2 (164 aa).

Residues 1–20 (METVLKTLFVLLVATSLTLA) form the signal peptide. Short sequence motifs (homodimer stabilization; interchain) lie at residues 34-43 (SRGWGDNLEW) and 49-56 (EGLYKAKT).

It belongs to the AGR family. Monomer and homodimer.

The protein localises to the secreted. It is found in the endoplasmic reticulum. The chain is Anterior gradient protein 2 from Xenopus tropicalis (Western clawed frog).